The chain runs to 265 residues: tRNA pseudouridine synthase A (265 aa).

The Nucleophile role is filled by D58. Y116 lines the substrate pocket.

It belongs to the tRNA pseudouridine synthase TruA family. As to quaternary structure, homodimer.

It catalyses the reaction uridine(38/39/40) in tRNA = pseudouridine(38/39/40) in tRNA. In terms of biological role, formation of pseudouridine at positions 38, 39 and 40 in the anticodon stem and loop of transfer RNAs. In Neisseria meningitidis serogroup C / serotype 2a (strain ATCC 700532 / DSM 15464 / FAM18), this protein is tRNA pseudouridine synthase A.